The sequence spans 1052 residues: Membrane-bound transcription factor site-1 protease (1052 aa).

The N-terminal stretch at M1–G17 is a signal peptide. The propeptide occupies K18–L186. N-linked (GlcNAc...) asparagine glycosylation occurs at N148. S168 bears the Phosphoserine mark. The Lumenal segment spans residues R187–G999. The 283-residue stretch at P190–Y472 folds into the Peptidase S8 domain. D218 acts as the Charge relay system in catalysis. N236 carries N-linked (GlcNAc...) asparagine glycosylation. H249 (charge relay system) is an active-site residue. N305 carries N-linked (GlcNAc...) asparagine glycosylation. S414 functions as the Charge relay system in the catalytic mechanism. N515 and N728 each carry an N-linked (GlcNAc...) asparagine glycan. Residues P877 to R887 are compositionally biased toward polar residues. Residues P877–M900 form a disordered region. N939 carries an N-linked (GlcNAc...) asparagine glycan. The helical transmembrane segment at Q1000–S1022 threads the bilayer. Over K1023–V1052 the chain is Cytoplasmic. Residues S1026–R1037 show a composition bias toward basic residues. The disordered stretch occupies residues S1026–V1052.

The protein belongs to the peptidase S8 family. Interacts with LYSET; this interaction bridges GNPTAB to MBTPS1. The cofactor is Ca(2+). Post-translationally, the 148 kDa zymogen is processed progressively into two membrane-bound 120 and 106 kDa forms in the endoplasmic reticulum, and late into a secreted 98 kDa form. The propeptide is autocatalytically removed through an intramolecular cleavage after Leu-186. Further cleavage generates 14, 10, and 8 kDa intermediates.

The protein localises to the endoplasmic reticulum membrane. The protein resides in the golgi apparatus membrane. The enzyme catalyses Processes precursors containing basic and hydrophobic/aliphatic residues at P4 and P2, respectively, with a relatively relaxed acceptance of amino acids at P1 and P3.. With respect to regulation, inhibited by divalent copper and zinc ions, but not by nickel or cobalt. Inhibited by its prosegment, but not smaller fragments. Inhibited by 4-(2-aminoethyl)benzenesulfonyl fluoride (AEBSF), a serine protease inhibitor. Functionally, serine protease that cleaves after hydrophobic or small residues, provided that Arg or Lys is in position P4: known substrates include SREBF1/SREBP1, SREBF2/SREBP2, BDNF, GNPTAB, ATF6, ATF6B and FAM20C. Cleaves substrates after Arg-Ser-Val-Leu (SREBP2), Arg-His-Leu-Leu (ATF6), Arg-Gly-Leu-Thr (BDNF) and its own propeptide after Arg-Arg-Leu-Leu. Catalyzes the first step regulated intramembrane proteolysis activation of the sterol regulatory element-binding proteins (SREBPs) SREBF1/SREBP1 and SREBF2/SREBP2. Also mediates the first step of the regulated intramembrane proteolytic activation of the cyclic AMP-dependent transcription factor ATF-6 (ATF6 and ATF6B). Mediates the protein cleavage of GNPTAB into subunit alpha and beta, thereby participating in biogenesis of lysosomes. Cleaves the propeptide from FAM20C which is required for FAM20C secretion from the Golgi apparatus membrane and for enhancement of FAM20C kinase activity, promoting osteoblast differentiation and biomineralization. Involved in the regulation of M6P-dependent Golgi-to-lysosome trafficking of lysosomal enzymes. It is required for the activation of CREB3L2/BBF2H7, a transcriptional activator of MIA3/TANGO and other genes controlling mega vesicle formation. Therefore, it plays a key role in the regulation of mega vesicle-mediated collagen trafficking. In astrocytes and osteoblasts, upon DNA damage and ER stress, mediates the first step of the regulated intramembrane proteolytic activation of the transcription factor CREB3L1, leading to the inhibition of cell-cycle progression. This is Membrane-bound transcription factor site-1 protease (Mbtps1) from Mus musculus (Mouse).